A 217-amino-acid polypeptide reads, in one-letter code: Putative cobalt transport protein CbiM (217 aa).

A run of 6 helical transmembrane segments spans residues 8-28, 44-64, 74-94, 107-127, 139-161, and 181-201; these read LPPE…VYGA, LIAV…PSVT, GIAV…IVLL, TLGA…WIAF, VFAA…LALA, and IFAV…VMLV.

The protein belongs to the CbiM family. As to quaternary structure, forms an energy-coupling factor (ECF) transporter complex composed of an ATP-binding protein (A component, CbiO), a transmembrane protein (T component, CbiQ) and 2 possible substrate-capture proteins (S components, CbiM and CbiN) of unknown stoichimetry.

It is found in the cell membrane. It participates in cofactor biosynthesis; adenosylcobalamin biosynthesis. Its function is as follows. Part of the energy-coupling factor (ECF) transporter complex CbiMNOQ involved in cobalt import. This Archaeoglobus fulgidus (strain ATCC 49558 / DSM 4304 / JCM 9628 / NBRC 100126 / VC-16) protein is Putative cobalt transport protein CbiM.